Here is a 72-residue protein sequence, read N- to C-terminus: Translation initiation factor IF-1 (72 aa).

Residues 1-72 form the S1-like domain; the sequence is MAKEDCIEMQ…SKARIIFRAR (72 aa).

The protein belongs to the IF-1 family. In terms of assembly, component of the 30S ribosomal translation pre-initiation complex which assembles on the 30S ribosome in the order IF-2 and IF-3, IF-1 and N-formylmethionyl-tRNA(fMet); mRNA recruitment can occur at any time during PIC assembly.

Its subcellular location is the cytoplasm. Functionally, one of the essential components for the initiation of protein synthesis. Stabilizes the binding of IF-2 and IF-3 on the 30S subunit to which N-formylmethionyl-tRNA(fMet) subsequently binds. Helps modulate mRNA selection, yielding the 30S pre-initiation complex (PIC). Upon addition of the 50S ribosomal subunit IF-1, IF-2 and IF-3 are released leaving the mature 70S translation initiation complex. The chain is Translation initiation factor IF-1 from Actinobacillus pleuropneumoniae serotype 5b (strain L20).